The sequence spans 192 residues: Crossover junction endodeoxyribonuclease RuvC (192 aa).

Active-site residues include Asp20, Glu80, and Asp153. Positions 20, 80, and 153 each coordinate Mg(2+).

This sequence belongs to the RuvC family. Homodimer which binds Holliday junction (HJ) DNA. The HJ becomes 2-fold symmetrical on binding to RuvC with unstacked arms; it has a different conformation from HJ DNA in complex with RuvA. In the full resolvosome a probable DNA-RuvA(4)-RuvB(12)-RuvC(2) complex forms which resolves the HJ. Mg(2+) is required as a cofactor.

Its subcellular location is the cytoplasm. The catalysed reaction is Endonucleolytic cleavage at a junction such as a reciprocal single-stranded crossover between two homologous DNA duplexes (Holliday junction).. In terms of biological role, the RuvA-RuvB-RuvC complex processes Holliday junction (HJ) DNA during genetic recombination and DNA repair. Endonuclease that resolves HJ intermediates. Cleaves cruciform DNA by making single-stranded nicks across the HJ at symmetrical positions within the homologous arms, yielding a 5'-phosphate and a 3'-hydroxyl group; requires a central core of homology in the junction. The consensus cleavage sequence is 5'-(A/T)TT(C/G)-3'. Cleavage occurs on the 3'-side of the TT dinucleotide at the point of strand exchange. HJ branch migration catalyzed by RuvA-RuvB allows RuvC to scan DNA until it finds its consensus sequence, where it cleaves and resolves the cruciform DNA. The sequence is that of Crossover junction endodeoxyribonuclease RuvC from Christiangramia forsetii (strain DSM 17595 / CGMCC 1.15422 / KT0803) (Gramella forsetii).